Here is a 208-residue protein sequence, read N- to C-terminus: 3-demethoxyubiquinol 3-hydroxylase (208 aa).

Fe cation contacts are provided by Glu57, Glu87, His90, Glu139, Glu171, and His174.

This sequence belongs to the COQ7 family. Fe cation serves as cofactor.

Its subcellular location is the cell membrane. The enzyme catalyses a 5-methoxy-2-methyl-3-(all-trans-polyprenyl)benzene-1,4-diol + AH2 + O2 = a 3-demethylubiquinol + A + H2O. The protein operates within cofactor biosynthesis; ubiquinone biosynthesis. Catalyzes the hydroxylation of 2-nonaprenyl-3-methyl-6-methoxy-1,4-benzoquinol during ubiquinone biosynthesis. This is 3-demethoxyubiquinol 3-hydroxylase from Burkholderia mallei (strain NCTC 10229).